Here is a 726-residue protein sequence, read N- to C-terminus: Catalase-peroxidase 1 (726 aa).

Residues 1 to 33 are disordered; the sequence is MSTSDDIHNTTATGKCPFHQGGHDQSAGAGTTT. Positions 105–226 form a cross-link, tryptophyl-tyrosyl-methioninium (Trp-Tyr) (with M-252); the sequence is WHGAGTYRSI…LGATEMGLIY (122 aa). Catalysis depends on His106, which acts as the Proton acceptor. A cross-link (tryptophyl-tyrosyl-methioninium (Tyr-Met) (with W-105)) is located at residues 226 to 252; that stretch reads YVNPEGPDHSGEPLSAAAAIRATFGNM. Residue His267 coordinates heme b.

It belongs to the peroxidase family. Peroxidase/catalase subfamily. Homodimer or homotetramer. Heme b serves as cofactor. In terms of processing, formation of the three residue Trp-Tyr-Met cross-link is important for the catalase, but not the peroxidase activity of the enzyme.

The catalysed reaction is H2O2 + AH2 = A + 2 H2O. The enzyme catalyses 2 H2O2 = O2 + 2 H2O. Functionally, bifunctional enzyme with both catalase and broad-spectrum peroxidase activity. This chain is Catalase-peroxidase 1, found in Escherichia coli O157:H7.